The chain runs to 500 residues: NAD(P)H-quinone oxidoreductase chain 4, chloroplastic (500 aa).

A run of 15 helical transmembrane segments spans residues 4–24 (FYWL…IALL), 35–55 (YTIC…CYHF), 80–100 (LGID…TTLA), 113–130 (LFHF…GSFS), 134–154 (LLLF…LLSM), 167–187 (FILY…GMGL), 208–228 (ALEI…SPII), 242–262 (HYST…YGLV), 274–294 (SIFS…AALT), 305–325 (IAYS…SITD), 330–350 (GAIL…FLAG), 364–384 (MGGI…FSMA), 386–406 (LALP…GIIT), 416–436 (ILIT…SLSM), and 462–482 (IFIF…PDFV).

This sequence belongs to the complex I subunit 4 family.

It is found in the plastid. It localises to the chloroplast thylakoid membrane. It catalyses the reaction a plastoquinone + NADH + (n+1) H(+)(in) = a plastoquinol + NAD(+) + n H(+)(out). The catalysed reaction is a plastoquinone + NADPH + (n+1) H(+)(in) = a plastoquinol + NADP(+) + n H(+)(out). The polypeptide is NAD(P)H-quinone oxidoreductase chain 4, chloroplastic (Nymphaea alba (White water-lily)).